A 622-amino-acid polypeptide reads, in one-letter code: METAPKPGRGVPPKRDKPQAKRKKPRRYWEEETTPAAVATSPGPPRKKARTGESRPPRSKSAHIAQKSRFSKKPPISKTAPDWKKPQRTLSGAQDPFPGPVPAPLEEARKFCRIDKSKTLPHSKPKTQSKLEKAEAQEEEASVRAARAELLLAEEPGFLVGEDGEDTAKILQTDIVEAVDIASAAKHFDLNLRQFGPYRLNYSRTGRHLALGGRRGHVAALDWVTKKLMCEINVMEAVRDIHFLHSEALLAVAQNRWLYIYDNQGIELHCIRRCDRVTRLEFLPFHFLLATTSETGFLTYLDVSVGKIVTALNVRAGRLSVMAQNPYNAVIHLGHSNGTVSLWSPAVKEPLAKILCHRGGVRAVAVDSTGTYMATSGLDHQLKIFDLRGTFQPLSSRTLPQGAGHLAFSQRGLLVAGMGDVVNIWAGQGKASPPSLEQPYLTHRLSGHVHGLQFCPFEDVLGVGHSGGFTSMLVPGAAEPNFDGLENNPYRSRKQRQEWEVKALLEKVPAELICLNPRALAEVDVVTLEQQKKERIERLGYDPDAKAAFQPKAKQKGRSSTASLVKRKKKVMDQEHRDKVRQSLEQQQQKKKQDMAMPPGARPSALDRFVRRAREGGLQVDP.

The segment at 1–135 is disordered; the sequence is METAPKPGRG…KTQSKLEKAE (135 aa). S41 is subject to Phosphoserine. Positions 106–118 are enriched in basic and acidic residues; the sequence is EEARKFCRIDKSK. WD repeat units lie at residues 192–233, 234–271, 314–353, 356–395, and 398–435; these read LRQF…CEIN, VMEAVRDIHFLHSEALLAVAQNRWLYIYDNQGIELHCI, VRAGRLSVMAQNPYNAVIHLGHSNGTVSLWSPAVKEPLAK, CHRGGVRAVAVDSTGTYMATSGLDHQLKIFDLRGTFQPLS, and TLPQGAGHLAFSQRGLLVAGMGDVVNIWAGQGKASPPS. The segment at 547 to 622 is disordered; it reads AAFQPKAKQK…AREGGLQVDP (76 aa). Residues 571–582 are compositionally biased toward basic and acidic residues; sequence VMDQEHRDKVRQ.

As to quaternary structure, part of the small subunit (SSU) processome, composed of more than 70 proteins and the RNA chaperone small nucleolar RNA (snoRNA) U3. Interacts with DDX21, NCL, NOP2 and EBNA1BP2.

The protein localises to the nucleus. It is found in the nucleolus. Scaffold component of the nucleolar structure. Required for localization of DDX21 and NCL to the granular compartment of the nucleolus. Part of the small subunit (SSU) processome, first precursor of the small eukaryotic ribosomal subunit. During the assembly of the SSU processome in the nucleolus, many ribosome biogenesis factors, an RNA chaperone and ribosomal proteins associate with the nascent pre-rRNA and work in concert to generate RNA folding, modifications, rearrangements and cleavage as well as targeted degradation of pre-ribosomal RNA by the RNA exosome. In Mus musculus (Mouse), this protein is WD repeat-containing protein 46 (Wdr46).